A 146-amino-acid polypeptide reads, in one-letter code: Protein archease (146 aa).

Residues D16, D145, and I146 each coordinate Ca(2+).

Belongs to the archease family.

Functionally, activates the tRNA-splicing ligase complex by facilitating the enzymatic turnover of catalytic subunit RtcB. Acts by promoting the guanylylation of RtcB, a key intermediate step in tRNA ligation. Can also alter the NTP specificity of RtcB such that ATP, dGTP or ITP is used efficiently. The chain is Protein archease from Methanosarcina mazei (strain ATCC BAA-159 / DSM 3647 / Goe1 / Go1 / JCM 11833 / OCM 88) (Methanosarcina frisia).